A 321-amino-acid polypeptide reads, in one-letter code: Polyamine aminopropyltransferase (321 aa).

The PABS domain occupies 23–256; sequence HLLYLEHAGP…DEWSFSFGSD (234 aa). S-methyl-5'-thioadenosine is bound at residue Q53. Residues H84 and D108 each coordinate spermidine. S-methyl-5'-thioadenosine contacts are provided by residues E127 and 159–160; that span reads DG. D177 serves as the catalytic Proton acceptor.

The protein belongs to the spermidine/spermine synthase family. Homodimer or homotetramer.

Its subcellular location is the cytoplasm. The catalysed reaction is S-adenosyl 3-(methylsulfanyl)propylamine + putrescine = S-methyl-5'-thioadenosine + spermidine + H(+). Its pathway is amine and polyamine biosynthesis; spermidine biosynthesis; spermidine from putrescine: step 1/1. Its function is as follows. Catalyzes the irreversible transfer of a propylamine group from the amino donor S-adenosylmethioninamine (decarboxy-AdoMet) to putrescine (1,4-diaminobutane) to yield spermidine. This chain is Polyamine aminopropyltransferase, found in Korarchaeum cryptofilum (strain OPF8).